The chain runs to 160 residues: Large ribosomal subunit protein uL11 (160 aa).

This sequence belongs to the universal ribosomal protein uL11 family. Part of the ribosomal stalk of the 50S ribosomal subunit. Interacts with L10 and the large rRNA to form the base of the stalk. L10 forms an elongated spine to which L12 dimers bind in a sequential fashion forming a multimeric L10(L12)X complex.

Its function is as follows. Forms part of the ribosomal stalk which helps the ribosome interact with GTP-bound translation factors. In Methanothermobacter thermautotrophicus (strain ATCC 29096 / DSM 1053 / JCM 10044 / NBRC 100330 / Delta H) (Methanobacterium thermoautotrophicum), this protein is Large ribosomal subunit protein uL11.